Reading from the N-terminus, the 401-residue chain is Chorismate synthase (401 aa).

Residues Arg40 and Arg46 each contribute to the NADP(+) site. FMN is bound by residues 135–137 (RAS), 256–257 (QA), Gly302, 317–321 (KPISS), and Arg343.

It belongs to the chorismate synthase family. In terms of assembly, homotetramer. FMNH2 is required as a cofactor.

It carries out the reaction 5-O-(1-carboxyvinyl)-3-phosphoshikimate = chorismate + phosphate. It participates in metabolic intermediate biosynthesis; chorismate biosynthesis; chorismate from D-erythrose 4-phosphate and phosphoenolpyruvate: step 7/7. Functionally, catalyzes the anti-1,4-elimination of the C-3 phosphate and the C-6 proR hydrogen from 5-enolpyruvylshikimate-3-phosphate (EPSP) to yield chorismate, which is the branch point compound that serves as the starting substrate for the three terminal pathways of aromatic amino acid biosynthesis. This reaction introduces a second double bond into the aromatic ring system. This is Chorismate synthase from Saccharopolyspora erythraea (strain ATCC 11635 / DSM 40517 / JCM 4748 / NBRC 13426 / NCIMB 8594 / NRRL 2338).